The chain runs to 141 residues: Hemoglobin subunit beta (141 aa).

Residues 2-141 (HWSEVELHEI…VVDAISKEYH (140 aa)) form the Globin domain. Positions 58 and 87 each coordinate heme b.

The protein belongs to the globin family. Heterotetramer of two alpha chains and two beta chains. Red blood cells.

Involved in oxygen transport from the lung to the various peripheral tissues. In Heterodontus portusjacksoni (Port Jackson shark), this protein is Hemoglobin subunit beta (HBB).